The following is a 282-amino-acid chain: HTH-type transcriptional activator RhaR (282 aa).

Positions 179 to 277 constitute an HTH araC/xylS-type domain; sequence DKLITALAGS…GMTPVQWRHR (99 aa). DNA-binding regions (H-T-H motif) lie at residues 196 to 217 and 244 to 267; these read EKFCEQEQCSERALRQQFRTQT and VSEVAMRCGFEDSNYFSVVFNREV.

Binds DNA as a dimer.

It is found in the cytoplasm. Functionally, activates expression of the rhaSR operon in response to L-rhamnose. In Enterobacter sp. (strain 638), this protein is HTH-type transcriptional activator RhaR.